The primary structure comprises 130 residues: DNA-binding protein HU (130 aa).

It belongs to the bacterial histone-like protein family.

In terms of biological role, histone-like DNA-binding protein which is capable of wrapping DNA to stabilize it, and thus to prevent its denaturation under extreme environmental conditions. The polypeptide is DNA-binding protein HU (hup) (Ureaplasma parvum serovar 3 (strain ATCC 700970)).